The sequence spans 488 residues: SAGA complex subunit HFI1 (488 aa).

Disordered stretches follow at residues 1–58 (MSAI…QGPN) and 352–383 (QLDDDKNEDECADEAKSINNGNNSSKDDIGDI). A compositionally biased stretch (polar residues) spans 37–58 (AVSNHTEPNNGNNETAEPQGPN).

In terms of assembly, component of the 1.8 MDa SAGA (Spt-Ada-Gcn5 acetyltransferase) complex, which is composed of 19 subunits TRA1, SPT7, TAF5, NGG1/ADA3, SGF73, SPT20/ADA5, SPT8, TAF12, TAF6, HFI1/ADA1, UBP8, GCN5, ADA2, SPT3, SGF29, TAF10, TAF9, SGF11 and SUS1. The SAGA complex is composed of 4 modules, namely the HAT (histone acetyltransferase) module (GCN5, ADA2, NGG1/ADA3 and SGF29), the DUB (deubiquitinating) module (UBP8, SGF11, SGF73 and SUS1), the core or TAF (TBP-associated factor) module (TAF5, TAF6, TAF9, TAF10 and TAF12), and the Tra1 or SPT (Suppressor of Ty) module (TRA1, HFI1/ADA1, SPT3, SPT7, SPT8 and SPT20/ADA5). The Tra1/SPT module binds activators, the core module recruits TBP (TATA-binding protein), the HAT module contains the histone H3 acetyltransferase GCN5, and the DUB module comprises the histone H2B deubiquitinase UBP8. Also identified in an altered form of SAGA, named SALSA (SAGA altered, Spt8 absent) or SLIK (SAGA-like) complex, which contains a C-terminal truncated form of SPT7 and is missing SPT8. However, it has been shown that the SAGA and SAGA-like SALSA/SLIK transcriptional coactivators are structurally and biochemically equivalent. Component of an ADA/GCN5 complex that consists of HFI1/ADA1, ADA2, NGG1/ADA3, SPT20/ADA5 and GCN5 and probably is a subcomplex of SAGA.

Its subcellular location is the nucleus. In terms of biological role, component of the transcription coactivator SAGA complex. SAGA acts as a general cofactor required for essentially all RNA polymerase II transcription. At the promoters, SAGA is required for transcription pre-initiation complex (PIC) recruitment. It influences RNA polymerase II transcriptional activity through different activities such as TBP interaction (via core/TAF module) and promoter selectivity, interaction with transcription activators (via Tra1/SPT module), and chromatin modification through histone acetylation (via HAT module) and deubiquitination (via DUB module). SAGA preferentially acetylates histones H3 (to form H3K9ac, H3K14ac, H3K18ac and H3K23ac) and H2B and deubiquitinates histone H2B. SAGA interacts with DNA via upstream activating sequences (UASs). Also identified in a modified version of SAGA named SALSA or SLIK. The cleavage of SPT7 and the absence of the SPT8 subunit in SLIK neither drive any major conformational differences in its structure compared with SAGA, nor significantly affect HAT, DUB, or DNA-binding activities. The protein is SAGA complex subunit HFI1 (HFI1) of Saccharomyces cerevisiae (strain ATCC 204508 / S288c) (Baker's yeast).